A 567-amino-acid polypeptide reads, in one-letter code: Serine/threonine-protein kinase SSN3 (567 aa).

Residues 68-470 (YEIIGYIAAG…AINALDHSYF (403 aa)) enclose the Protein kinase domain. Residue 74–82 (IAAGTYGKV) participates in ATP binding. The interval 88–179 (RQSSKSSSST…RNSENTDNRR (92 aa)) is disordered. The segment covering 90–101 (SSKSSSSTGSDS) has biased composition (low complexity). 2 stretches are compositionally biased toward polar residues: residues 102-122 (LAQD…QNAG) and 133-150 (PNSN…ELST). Residues 167–179 (GDKRNSENTDNRR) are compositionally biased toward basic and acidic residues. Position 190 (lysine 190) interacts with ATP. Aspartate 293 functions as the Proton acceptor in the catalytic mechanism. Over residues 546-556 (AVSGNSSSQSS) the composition is skewed to low complexity. Positions 546 to 567 (AVSGNSSSQSSRNMEPMKKKRK) are disordered.

The protein belongs to the protein kinase superfamily. CMGC Ser/Thr protein kinase family. CDC2/CDKX subfamily. As to quaternary structure, component of the SRB8-11 complex, a regulatory module of the Mediator complex. The cofactor is Mg(2+).

It is found in the nucleus. The catalysed reaction is L-seryl-[protein] + ATP = O-phospho-L-seryl-[protein] + ADP + H(+). It catalyses the reaction L-threonyl-[protein] + ATP = O-phospho-L-threonyl-[protein] + ADP + H(+). The enzyme catalyses [DNA-directed RNA polymerase] + ATP = phospho-[DNA-directed RNA polymerase] + ADP + H(+). In terms of biological role, component of the SRB8-11 complex. The SRB8-11 complex is a regulatory module of the Mediator complex which is itself involved in regulation of basal and activated RNA polymerase II-dependent transcription. The SRB8-11 complex may be involved in the transcriptional repression of a subset of genes regulated by Mediator. It may inhibit the association of the Mediator complex with RNA polymerase II to form the holoenzyme complex. The SRB8-11 complex phosphorylates the C-terminal domain (CTD) of the largest subunit of RNA polymerase II. The chain is Serine/threonine-protein kinase SSN3 (SSN3) from Candida glabrata (strain ATCC 2001 / BCRC 20586 / JCM 3761 / NBRC 0622 / NRRL Y-65 / CBS 138) (Yeast).